The sequence spans 164 residues: MQRIALYPGSFDPVTNGHLDVVRQAVHLCDKLIVAVGVHHGKKPLFSTEERLAMAHEVFGPVASAAGCAFDASTYDNLTVTAAQQAGAILMIRGLRDGTDLDYEMQLAGMNQTMAPSIQTVFVPASVPVRPITASLVRQIAAMGGEISHFVPPSVVAPLKAKFA.

Serine 10 lines the substrate pocket. Residues 10–11 (SF) and histidine 18 contribute to the ATP site. The substrate site is built by lysine 42, threonine 79, and arginine 93. ATP contacts are provided by residues 94–96 (GLR), glutamate 104, and 129–135 (VRPITAS).

Belongs to the bacterial CoaD family. Homohexamer. It depends on Mg(2+) as a cofactor.

Its subcellular location is the cytoplasm. The enzyme catalyses (R)-4'-phosphopantetheine + ATP + H(+) = 3'-dephospho-CoA + diphosphate. It participates in cofactor biosynthesis; coenzyme A biosynthesis; CoA from (R)-pantothenate: step 4/5. Its function is as follows. Reversibly transfers an adenylyl group from ATP to 4'-phosphopantetheine, yielding dephospho-CoA (dPCoA) and pyrophosphate. The chain is Phosphopantetheine adenylyltransferase from Bradyrhizobium sp. (strain ORS 278).